Reading from the N-terminus, the 345-residue chain is Esterase (345 aa).

The first 39 residues, 1 to 39, serve as a signal peptide directing secretion; it reads MSSAMRKTTNSPVVRRLTAAAVALGSCLALAGPAGSAGA. Disulfide bonds link Cys-73–Cys-103, Cys-156–Cys-180, and Cys-236–Cys-294.

It localises to the secreted. The sequence is that of Esterase (estA) from Streptomyces scabiei.